Reading from the N-terminus, the 329-residue chain is Probable CTD kinase subunit alpha homolog (329 aa).

In terms of domain architecture, Protein kinase spans 22–297; the sequence is YEKIRIIGEG…VEQVVGSKYF (276 aa). Residues 28-36 and lysine 49 each bind ATP; that span reads IGEGTFGQV. Aspartate 139 acts as the Proton acceptor in catalysis.

Belongs to the protein kinase superfamily. CMGC Ser/Thr protein kinase family. CDC2/CDKX subfamily. Component of the CTDK-I complex.

Its subcellular location is the nucleus. The protein resides in the nucleolus. It catalyses the reaction [DNA-directed RNA polymerase] + ATP = phospho-[DNA-directed RNA polymerase] + ADP + H(+). Functionally, catalytic subunit of the CTDK-I complex, which hyperphosphorylates the C-terminal heptapeptide repeat domain (CTD) of the largest RNA polymerase II subunit. Involved in RNA polymerase II transcriptional elongation and pre-mRNA 3'-end processing. This chain is Probable CTD kinase subunit alpha homolog (CTK1), found in Encephalitozoon cuniculi (strain GB-M1) (Microsporidian parasite).